The following is a 258-amino-acid chain: Small ribosomal subunit protein uS2 (258 aa).

The interval 226–258 (AQNKDVEPVADKDEKPEAAPVDEAETATETTGE) is disordered. Residues 229-242 (KDVEPVADKDEKPE) are compositionally biased toward basic and acidic residues. Residues 245–258 (PVDEAETATETTGE) show a composition bias toward acidic residues.

It belongs to the universal ribosomal protein uS2 family.

This is Small ribosomal subunit protein uS2 from Solidesulfovibrio magneticus (strain ATCC 700980 / DSM 13731 / RS-1) (Desulfovibrio magneticus).